A 169-amino-acid chain; its full sequence is Thermonuclease (169 aa).

An N-terminal signal peptide occupies residues Met-1–Ser-26. Residues Arg-65, Glu-73, and Arg-115 contribute to the active site.

It belongs to the thermonuclease family. Ca(2+) serves as cofactor.

The protein resides in the secreted. The enzyme catalyses Endonucleolytic cleavage to nucleoside 3'-phosphates and 3'-phosphooligonucleotide end-products.. Its function is as follows. Enzyme that catalyzes the hydrolysis of both DNA and RNA at the 5'-position of the phosphodiester bond. The polypeptide is Thermonuclease (nucH) (Staphylococcus hyicus).